A 161-amino-acid polypeptide reads, in one-letter code: Small ribosomal subunit protein uS9 (161 aa).

A compositionally biased stretch (polar residues) spans 1–21 (MATLQSLADLNRANTQTSNPE). The interval 1 to 25 (MATLQSLADLNRANTQTSNPENEAP) is disordered.

The protein belongs to the universal ribosomal protein uS9 family.

The chain is Small ribosomal subunit protein uS9 from Methylorubrum extorquens (strain CM4 / NCIMB 13688) (Methylobacterium extorquens).